A 211-amino-acid chain; its full sequence is ATP phosphoribosyltransferase (211 aa).

It belongs to the ATP phosphoribosyltransferase family. Short subfamily. In terms of assembly, heteromultimer composed of HisG and HisZ subunits.

It localises to the cytoplasm. It catalyses the reaction 1-(5-phospho-beta-D-ribosyl)-ATP + diphosphate = 5-phospho-alpha-D-ribose 1-diphosphate + ATP. Its pathway is amino-acid biosynthesis; L-histidine biosynthesis; L-histidine from 5-phospho-alpha-D-ribose 1-diphosphate: step 1/9. In terms of biological role, catalyzes the condensation of ATP and 5-phosphoribose 1-diphosphate to form N'-(5'-phosphoribosyl)-ATP (PR-ATP). Has a crucial role in the pathway because the rate of histidine biosynthesis seems to be controlled primarily by regulation of HisG enzymatic activity. The polypeptide is ATP phosphoribosyltransferase (Pseudomonas syringae pv. tomato (strain ATCC BAA-871 / DC3000)).